The following is a 106-amino-acid chain: Transcription initiation factor IIA subunit 2 (106 aa).

It belongs to the TFIIA subunit 2 family. In terms of assembly, TFIIA is a heterodimer of the large unprocessed subunit 1 and a small subunit gamma. It was originally believed to be a heterotrimer of an alpha, a beta and a gamma subunit.

The protein resides in the nucleus. Functionally, TFIIA is a component of the transcription machinery of RNA polymerase II and plays an important role in transcriptional activation. TFIIA in a complex with TBP mediates transcriptional activity. Protein involved in the resistance to X.oryzae. The protein is Transcription initiation factor IIA subunit 2 (TFIIAy) of Oryza sativa subsp. indica (Rice).